A 183-amino-acid polypeptide reads, in one-letter code: Ribosome-recycling factor (183 aa).

This sequence belongs to the RRF family.

It localises to the cytoplasm. Its function is as follows. Responsible for the release of ribosomes from messenger RNA at the termination of protein biosynthesis. May increase the efficiency of translation by recycling ribosomes from one round of translation to another. In Ureaplasma urealyticum serovar 10 (strain ATCC 33699 / Western), this protein is Ribosome-recycling factor.